Here is a 417-residue protein sequence, read N- to C-terminus: Signal recognition particle receptor FtsY (417 aa).

GTP contacts are provided by residues 228–235, 310–314, and 368–371; these read GINGTGKT, DTAGR, and TKID.

The protein belongs to the GTP-binding SRP family. FtsY subfamily. In terms of assembly, part of the signal recognition particle protein translocation system, which is composed of SRP and FtsY.

It localises to the cell membrane. The protein localises to the cytoplasm. The catalysed reaction is GTP + H2O = GDP + phosphate + H(+). Functionally, involved in targeting and insertion of nascent membrane proteins into the cytoplasmic membrane. Acts as a receptor for the complex formed by the signal recognition particle (SRP) and the ribosome-nascent chain (RNC). This chain is Signal recognition particle receptor FtsY, found in Methanosarcina acetivorans (strain ATCC 35395 / DSM 2834 / JCM 12185 / C2A).